Consider the following 347-residue polypeptide: Sensor protein VraS (347 aa).

2 helical membrane passes run 13–33 (ILVYSMLAAFLFIDKVFVNII) and 43–63 (IFGIPVFLFLNLIIILLCIIV). The region spanning 150 to 341 (RLARELHDSV…RIEVKAPLNK (192 aa)) is the Histidine kinase domain. Position 156 is a phosphohistidine (histidine 156).

Autophosphorylated on His-156.

The protein resides in the cell membrane. It carries out the reaction ATP + protein L-histidine = ADP + protein N-phospho-L-histidine.. Member of the two-component regulatory system PprA/PprB involved in biofilm formation by controlling the expression of many related genes including type IVb pili major subunit flp pilin, adhesin bapA or cupE fimbriae. Also modulates quorum-sensing signal production acting on both negative and positive modulators. Functions as a heme sensor histidine kinase which is autophosphorylated at a histidine residue and transfers its phosphate group to PprB. The polypeptide is Sensor protein VraS (vraS) (Staphylococcus aureus (strain Mu3 / ATCC 700698)).